The following is a 375-amino-acid chain: SAP-like protein BP-73 (375 aa).

3 disordered regions span residues 46-113 (PNNH…VPGE), 130-233 (RARG…VKFQ), and 257-315 (TLEN…PSLQ). A compositionally biased stretch (basic residues) spans 59-70 (HQKGGSARRKSK). The span at 76 to 86 (DDSENIDEFDT) shows a compositional bias: acidic residues. Residues 88-109 (IMSSKNGPPISLTSNSRPQATS) show a composition bias toward polar residues. 2 stretches are compositionally biased toward basic and acidic residues: residues 134-152 (KGKE…ERGS) and 163-186 (HSVD…KRSN). The span at 187–197 (ESGNKQNSSIF) shows a compositional bias: polar residues. Over residues 295 to 311 (DEPDASDTDEPSGEYDE) the composition is skewed to acidic residues. Positions 338 to 375 (DLSTLKVTELRELAKSRGIKGYSKMKKNDLVELLSNMA) are interaction with WAXY.

Binds to the DNA in the promoter region of WAXY containing the sequence 5'-ACGCACGCTAACGTGA-3'. As to expression, expressed in tissues with high cell division activities: in root tips, stem node, panicle, flower and immature seed. Weakly expressed in root and leaf.

In terms of biological role, may regulate cell proliferation and plant growth. This Oryza sativa subsp. japonica (Rice) protein is SAP-like protein BP-73 (BP-73).